A 361-amino-acid chain; its full sequence is MVAATEFPVSPMLTDAARRNRLWVRIWLYCVIVTLFAIVLVGGATRLTDSGLSITEWKPIHGVIPPLGEAEWAEEFARYQQIPEYEQINKGMSLEEFKGIFWWEWAHRLLARGVGFVFALPLLFFWVTGRLERHLKPKLLGILALGGLQGAVGWWMVASGLSERVDVSQYRLATHLTIACLIFNATMAVARGLAPHSGKPALDSTRRFAFWLVVAVLVQIYLGGLVAGLDAGMAYNTWPLMDGALVPQGLFEHRPAWVNLFENPKTVQFVHRLGAYVVLLLALWHAIATLRAEPDSTHARRAVLLFLLVCVQAAIGIATLLMVVPMDVALAHQAMALIVLGFATAHWRATRGAYPFMQAAA.

The next 8 helical transmembrane spans lie at 22–42 (LWVR…VLVG), 109–129 (LLAR…WVTG), 139–159 (LLGI…MVAS), 175–195 (HLTI…GLAP), 208–228 (FAFW…LVAG), 269–289 (FVHR…AIAT), 303–323 (VLLF…LLMV), and 324–344 (VPMD…GFAT). A heme-binding site is contributed by His-271. Position 332 (His-332) interacts with heme.

This sequence belongs to the COX15/CtaA family. Type 2 subfamily. Interacts with CtaB. The cofactor is heme b.

It is found in the cell membrane. The enzyme catalyses Fe(II)-heme o + 2 A + H2O = Fe(II)-heme a + 2 AH2. The protein operates within porphyrin-containing compound metabolism; heme A biosynthesis; heme A from heme O: step 1/1. In terms of biological role, catalyzes the conversion of heme O to heme A by two successive hydroxylations of the methyl group at C8. The first hydroxylation forms heme I, the second hydroxylation results in an unstable dihydroxymethyl group, which spontaneously dehydrates, resulting in the formyl group of heme A. The protein is Heme A synthase of Chelativorans sp. (strain BNC1).